We begin with the raw amino-acid sequence, 294 residues long: Polyketide transferase grgF (294 aa).

Catalysis depends on residues Cys-115, Asp-240, and His-269.

The protein belongs to the polyketide transferase af380 family. Homodimer.

Its pathway is secondary metabolite biosynthesis. Polyketide transferase; part of the gene cluster that mediates the biosynthesis of gregatin A, a fungal polyketide featuring an alkylated furanone core. The PKS grgA synthesizes C11 and C4 polyketide chains in the presence and absence of the trans-enoyl reductase grgB, respectively. The polyketide transferase grgF is then responsible for the fusion of the two carbon chains to produce the furanone skeleton of gregatin A. GrgF first undergoes a conformational change to an open form, and the active site Cys-115 is acylated by the C11 chain. After the elimination of the phosphopantetheinyl chain, the second polyketide chain of four carbons long is delivered adjacent to the enzyme-bound C11 chain. The catalytic histidine, His-269, deprotonates a proton from C-2 of the long chain, and the resultant carbanion attacks the C-1 carbonyl of the crotonyl group to perform Claisen condensation, by which the phosphopantetheinyl chain is released. Eventually, hydrolysis of the thioester linkage probably by a His-269-activated water molecule completes the reaction to afford the grgF final product. Next, the cytochrome P450 monooxygenase grgG accepts the unstable grgF final product as substrate and performs the oxidative cyclization to furnish the gregatin scaffold and leads to the formation of desmethylgregatin A. Finally, the O-methyltransferase grgD methylates the carboxyl group of desmethylgregatin A to provide gregatin A. The sequence is that of Polyketide transferase grgF from Penicillium sp.